The chain runs to 312 residues: Acetyl-coenzyme A carboxylase carboxyl transferase subunit beta (312 aa).

The interval 1–52 (MEMDTAVENPAVEKNGQPTPSSTSTATDAAPTPNAPNRPAPNTAGNRKRGVP) is disordered. Over residues 18 to 32 (PTPSSTSTATDAAPT) the composition is skewed to low complexity. The 258-residue stretch at 55 to 312 (VWRKCDSCGA…IATAIDYCGK (258 aa)) folds into the CoA carboxyltransferase N-terminal domain. Zn(2+) contacts are provided by Cys59, Cys62, Cys78, and Cys81. The C4-type zinc-finger motif lies at 59–81 (CDSCGASLFYKEVQQRLNVCPQC).

The protein belongs to the AccD/PCCB family. In terms of assembly, acetyl-CoA carboxylase is a heterohexamer composed of biotin carboxyl carrier protein (AccB), biotin carboxylase (AccC) and two subunits each of ACCase subunit alpha (AccA) and ACCase subunit beta (AccD). It depends on Zn(2+) as a cofactor.

The protein localises to the cytoplasm. It catalyses the reaction N(6)-carboxybiotinyl-L-lysyl-[protein] + acetyl-CoA = N(6)-biotinyl-L-lysyl-[protein] + malonyl-CoA. Its pathway is lipid metabolism; malonyl-CoA biosynthesis; malonyl-CoA from acetyl-CoA: step 1/1. Component of the acetyl coenzyme A carboxylase (ACC) complex. Biotin carboxylase (BC) catalyzes the carboxylation of biotin on its carrier protein (BCCP) and then the CO(2) group is transferred by the transcarboxylase to acetyl-CoA to form malonyl-CoA. This chain is Acetyl-coenzyme A carboxylase carboxyl transferase subunit beta, found in Rhodopirellula baltica (strain DSM 10527 / NCIMB 13988 / SH1).